Reading from the N-terminus, the 355-residue chain is MSGQPKRLMVMAGGTGGHVFPGLAVAHHLMAQGWQVRWLGTADRMEADLVPKHGIDIDFIRISGLRGKGVKALLAAPLRIFNAWRQARAIMKRFKPDVVLGMGGYVSGPGGLAAWSLGIPVVLHEQNGIAGLTNQWLAKIATTVMQAFPGAFPNAEVVGNPVRTDVLALPLPQERLAGRDGPIRVLVVGGSQGARVLNQTMPQVAARLGDTVTIWHQSGKGAQHTVEQAYAGVGQPQHKVTEFIDDMAAAYAWADVVVCRSGALTVSEIAAAGLPAIFVPFQHKDRQQYWNALPLENAGAAKIFEQPQFTVEAVADTLAGWSREALLTMAERARAVSIPDATERVASEVSRVART.

Residues 15–17 (TGG), N127, R163, S191, I244, 263–268 (ALTVSE), and Q288 each bind UDP-N-acetyl-alpha-D-glucosamine.

This sequence belongs to the glycosyltransferase 28 family. MurG subfamily.

The protein localises to the cell inner membrane. The catalysed reaction is di-trans,octa-cis-undecaprenyl diphospho-N-acetyl-alpha-D-muramoyl-L-alanyl-D-glutamyl-meso-2,6-diaminopimeloyl-D-alanyl-D-alanine + UDP-N-acetyl-alpha-D-glucosamine = di-trans,octa-cis-undecaprenyl diphospho-[N-acetyl-alpha-D-glucosaminyl-(1-&gt;4)]-N-acetyl-alpha-D-muramoyl-L-alanyl-D-glutamyl-meso-2,6-diaminopimeloyl-D-alanyl-D-alanine + UDP + H(+). It participates in cell wall biogenesis; peptidoglycan biosynthesis. Its function is as follows. Cell wall formation. Catalyzes the transfer of a GlcNAc subunit on undecaprenyl-pyrophosphoryl-MurNAc-pentapeptide (lipid intermediate I) to form undecaprenyl-pyrophosphoryl-MurNAc-(pentapeptide)GlcNAc (lipid intermediate II). In Salmonella choleraesuis (strain SC-B67), this protein is UDP-N-acetylglucosamine--N-acetylmuramyl-(pentapeptide) pyrophosphoryl-undecaprenol N-acetylglucosamine transferase.